The chain runs to 223 residues: Putative nudix hydrolase 2 (223 aa).

The 142-residue stretch at 72–213 (ASADGVSIIA…SIVVESTLLA (142 aa)) folds into the Nudix hydrolase domain. Residues 111–132 (GLIDAGETAQQAAIRELKEETG) carry the Nudix box motif. Residues glutamate 126 and glutamate 130 each contribute to the Mg(2+) site.

The protein belongs to the Nudix hydrolase family. Requires Mg(2+) as cofactor. The cofactor is Mn(2+).

In terms of biological role, probably mediates the hydrolysis of some nucleoside diphosphate derivatives. This chain is Putative nudix hydrolase 2 (ndx-2), found in Caenorhabditis elegans.